The sequence spans 289 residues: Tachykinins (289 aa).

The first 24 residues, 1 to 24, serve as a signal peptide directing secretion; the sequence is MRSQGGSFAVALLLLLLLTAAATA. Positions 25–49 are excised as a propeptide; the sequence is ADAEPDVESSVSTLPPGADAPRRMV. The interval 28–80 is disordered; it reads EPDVESSVSTLPPGADAPRRMVKRAPTSSFIGMRGKKEDEKDQRAADWMGPDP. An Arginine amide modification is found at arginine 61. Over residues 62–72 the composition is skewed to basic and acidic residues; it reads GKKEDEKDQRA. Asparagine 95 is subject to Asparagine amide. Arginine amide is present on arginine 110. Valine 155 is subject to Valine amide. The tract at residues 156-175 is disordered; it reads GKRAPTGFTGMRGKRPMSGD. Arginine 167, arginine 198, arginine 237, and arginine 281 each carry arginine amide. Residues 285 to 289 constitute a propeptide that is removed on maturation; the sequence is PALAE.

Belongs to the tachykinin family.

The protein localises to the secreted. In terms of biological role, tachykinins are active peptides which excite neurons, evoke behavioral responses, are potent vasodilators and secretagogues, and contract (directly or indirectly) many smooth muscles. Stimulates gut muscle contractions. The sequence is that of Tachykinins from Drosophila pseudoobscura pseudoobscura (Fruit fly).